Reading from the N-terminus, the 152-residue chain is MTITDLVLILFIAALLAYALYDQFIMPRRNGPTQLSIALLRRSRVDSVIFVGLVAILIYNNVTSHGAQMTTWLLSALALMGFYIFWIRTPRIIFKQHGFFFANVWIEYNRIKEMNLSEDGVLVMQLEQRRLLIRVRNIDDLEKIYKLLIENQ.

3 helical membrane-spanning segments follow: residues 6-26 (LVLILFIAALLAYALYDQFIM), 45-65 (VDSVIFVGLVAILIYNNVTSH), and 67-87 (AQMTTWLLSALALMGFYIFWI).

The protein belongs to the UPF0266 family.

Its subcellular location is the cell inner membrane. In Salmonella arizonae (strain ATCC BAA-731 / CDC346-86 / RSK2980), this protein is UPF0266 membrane protein YobD.